A 360-amino-acid chain; its full sequence is Lipid-A-disaccharide synthase (360 aa).

This sequence belongs to the LpxB family.

The enzyme catalyses a lipid X + a UDP-2-N,3-O-bis[(3R)-3-hydroxyacyl]-alpha-D-glucosamine = a lipid A disaccharide + UDP + H(+). Its pathway is bacterial outer membrane biogenesis; LPS lipid A biosynthesis. In terms of biological role, condensation of UDP-2,3-diacylglucosamine and 2,3-diacylglucosamine-1-phosphate to form lipid A disaccharide, a precursor of lipid A, a phosphorylated glycolipid that anchors the lipopolysaccharide to the outer membrane of the cell. This Helicobacter acinonychis (strain Sheeba) protein is Lipid-A-disaccharide synthase.